The following is a 93-amino-acid chain: Cell division topological specificity factor (93 aa).

This sequence belongs to the MinE family.

Functionally, prevents the cell division inhibition by proteins MinC and MinD at internal division sites while permitting inhibition at polar sites. This ensures cell division at the proper site by restricting the formation of a division septum at the midpoint of the long axis of the cell. The polypeptide is Cell division topological specificity factor (Methylococcus capsulatus (strain ATCC 33009 / NCIMB 11132 / Bath)).